Reading from the N-terminus, the 221-residue chain is uncharacterized protein (221 aa).

One can recognise a CUE domain in the interval Asp20–Thr63. A disordered region spans residues Glu131 to Lys194. Residues Lys156 to Asn166 show a composition bias toward low complexity. The segment covering Lys169–Pro183 has biased composition (basic and acidic residues).

This is an uncharacterized protein from Caenorhabditis elegans.